A 154-amino-acid chain; its full sequence is Ribosome maturation factor RimP (154 aa).

Belongs to the RimP family.

The protein localises to the cytoplasm. Its function is as follows. Required for maturation of 30S ribosomal subunits. This Finegoldia magna (strain ATCC 29328 / DSM 20472 / WAL 2508) (Peptostreptococcus magnus) protein is Ribosome maturation factor RimP.